Reading from the N-terminus, the 193-residue chain is Probable nicotinate-nucleotide adenylyltransferase (193 aa).

This sequence belongs to the NadD family.

It catalyses the reaction nicotinate beta-D-ribonucleotide + ATP + H(+) = deamido-NAD(+) + diphosphate. It functions in the pathway cofactor biosynthesis; NAD(+) biosynthesis; deamido-NAD(+) from nicotinate D-ribonucleotide: step 1/1. Its function is as follows. Catalyzes the reversible adenylation of nicotinate mononucleotide (NaMN) to nicotinic acid adenine dinucleotide (NaAD). This is Probable nicotinate-nucleotide adenylyltransferase from Flavobacterium johnsoniae (strain ATCC 17061 / DSM 2064 / JCM 8514 / BCRC 14874 / CCUG 350202 / NBRC 14942 / NCIMB 11054 / UW101) (Cytophaga johnsonae).